The primary structure comprises 583 residues: RuBisCO large subunit-binding protein subunit alpha, chloroplastic (583 aa).

Positions Met-1–Cys-14 are enriched in polar residues. A disordered region spans residues Met-1–Arg-35. The N-terminal 45 residues, Met-1–Ala-45, are a transit peptide targeting the chloroplast. Positions Ser-15 to Arg-31 are enriched in low complexity. Ser-89 bears the Phosphoserine mark.

It belongs to the chaperonin (HSP60) family. As to quaternary structure, oligomer of probably six alpha and six beta subunits.

It is found in the plastid. The protein localises to the chloroplast. In terms of biological role, this protein binds RuBisCO small and large subunits and is implicated in the assembly of the enzyme oligomer. The protein is RuBisCO large subunit-binding protein subunit alpha, chloroplastic of Brassica napus (Rape).